Consider the following 198-residue polypeptide: Inosine triphosphate pyrophosphatase (198 aa).

Residue alanine 2 is modified to N-acetylalanine. 14 to 19 is a binding site for ITP; sequence TGNAKK. Residue glutamate 44 participates in Mg(2+) binding. Residues lysine 56, 72–73, and lysine 89 each bind ITP; that span reads DT. Position 146 is a phosphoserine (serine 146). ITP-binding positions include 149-152, lysine 172, and 177-178; these read FGWD and HR.

This sequence belongs to the HAM1 NTPase family. Homodimer. Mg(2+) is required as a cofactor. Requires Mn(2+) as cofactor.

It is found in the cytoplasm. It catalyses the reaction ITP + H2O = IMP + diphosphate + H(+). The enzyme catalyses dITP + H2O = dIMP + diphosphate + H(+). It carries out the reaction XTP + H2O = XMP + diphosphate + H(+). The catalysed reaction is N(6)-hydroxy-dATP + H2O = N(6)-hydroxy-dAMP + diphosphate + H(+). Its function is as follows. Pyrophosphatase that hydrolyzes the non-canonical purine nucleotides inosine triphosphate (ITP), deoxyinosine triphosphate (dITP) as well as 2'-deoxy-N-6-hydroxylaminopurine triphosphate (dHAPTP) and xanthosine 5'-triphosphate (XTP) to their respective monophosphate derivatives. The enzyme does not distinguish between the deoxy- and ribose forms. Probably excludes non-canonical purines from RNA and DNA precursor pools, thus preventing their incorporation into RNA and DNA and avoiding chromosomal lesions. The protein is Inosine triphosphate pyrophosphatase (Itpa) of Mus musculus (Mouse).